A 389-amino-acid polypeptide reads, in one-letter code: NAD-dependent protein deacetylase sirtuin-2 (389 aa).

The interval 1 to 34 (MAEPDPSHPLETQAGKVQEAQDSDSDSEGGAAGG) is disordered. Position 2 is an N-acetylalanine (Ala-2). A phosphoserine mark is found at Ser-23, Ser-25, and Ser-27. Positions 41-51 (LRNLFSQTLSL) match the Nuclear export signal motif. At Ser-53 the chain carries Phosphoserine. The Deacetylase sirtuin-type domain occupies 57-338 (RLLDELTLEG…LALAELLGWK (282 aa)). NAD(+) is bound by residues 85–89 (AGIST) and 95–97 (DFR). Residue Ser-100 is modified to Phosphoserine. Residue 167–170 (QNID) coordinates NAD(+). Residue His-187 is the Proton acceptor of the active site. Cys-195 and Cys-200 together coordinate Zn(2+). Position 207 is a phosphoserine (Ser-207). Residues Cys-221 and Cys-224 each coordinate Zn(2+). NAD(+) contacts are provided by residues 262–263 (TS), 286–288 (NKE), and Cys-324. The segment at 351–389 (SIDAQSGAGVPNPSTSASPKKSPPPAKDEARTTEREKPQ) is disordered. A compositionally biased stretch (low complexity) spans 361 to 370 (PNPSTSASPK). Position 368 is a phosphoserine; by CDK2 and CDK5 (Ser-368). Ser-372 bears the Phosphoserine mark. Basic and acidic residues predominate over residues 376–389 (AKDEARTTEREKPQ).

This sequence belongs to the sirtuin family. Class I subfamily. In terms of assembly, interacts with CDC20, FOXO3 and FZR1. Associates with microtubules in primary cortical mature neurons. Homotrimer. Isoform 1 and isoform 2 interact (via both phosphorylated, unphosphorylated, active or inactive forms) with HDAC6; the interaction is necessary for the complex to interact with alpha-tubulin, suggesting that these proteins belong to a large complex that deacetylates the cytoskeleton. Interacts with FOXO1; the interaction is disrupted upon serum-starvation or oxidative stress, leading to increased level of acetylated FOXO1 and induction of autophagy. Interacts with RELA; the interaction occurs in the cytoplasm and is increased in a TNF-alpha-dependent manner. Interacts with HOXA10; the interaction is direct. Interacts with YWHAB and YWHAG; the interactions occur in a AKT-dependent manner and increase SIRT2-dependent TP53 deacetylation. Interacts with MAPK1/ERK2 and MAPK3/ERK1; the interactions increase SIRT2 stability and deacetylation activity. Interacts (phosphorylated form) with KMT5A isoform 2; the interaction is direct, stimulates KMT5A-mediated methyltransferase activity on histone at 'Lys-20' (H4K20me1) and is increased in a H(2)O(2)-induced oxidative stress-dependent manner. Interacts with G6PD; the interaction is enhanced by H(2)O(2) treatment. Interacts with a G1/S-specific cyclin E-CDK2 complex. Interacts with AURKA, CDK5R1 (p35 form) and CDK5 and HIF1A. Isoform 1, isoform 2 and isoform 5 interact (via C-terminus region) with EP300. Interacts with the tRNA ligase SARS1; recruited to the VEGFA promoter via interaction with SARS1. Interacts with BEX4; negatively regulates alpha-tubulin deacetylation by SIRT2. Zn(2+) is required as a cofactor. In terms of processing, phosphorylated at phosphoserine and phosphothreonine. Phosphorylated at Ser-368 by a mitotic kinase CDK1/cyclin B at the G2/M transition; phosphorylation regulates the delay in cell-cycle progression. Phosphorylated at Ser-368 by a mitotic kinase G1/S-specific cyclin E/Cdk2 complex; phosphorylation inactivates SIRT2-mediated alpha-tubulin deacetylation and thereby negatively regulates cell adhesion, cell migration and neurite outgrowth during neuronal differentiation. Phosphorylated by cyclin A/Cdk2 and p35-Cdk5 complexes and to a lesser extent by the cyclin D3/Cdk4 and cyclin B/Cdk1, in vitro. Dephosphorylated at Ser-368 by CDC14A and CDC14B around early anaphase. Post-translationally, acetylated by EP300; acetylation leads both to the decreased of SIRT2-mediated alpha-tubulin deacetylase activity and SIRT2-mediated down-regulation of TP53 transcriptional activity. Ubiquitinated. As to expression, isoform 1 is expressed in heart, liver and skeletal muscle, weakly expressed in the cortex. Isoform 2 is strongly expressed in the cortex, weakly expressed in heart and liver. Weakly expressed in several malignancies including breast, liver, brain, kidney and prostate cancers compared to normal tissues. Weakly expressed in glioma cell lines compared to normal brain tissues (at protein level). Widely expressed. Highly expressed in heart, brain and skeletal muscle, while it is weakly expressed in placenta and lung. Down-regulated in many gliomas suggesting that it may act as a tumor suppressor gene in human gliomas possibly through the regulation of microtubule network.

The protein localises to the nucleus. Its subcellular location is the cytoplasm. It localises to the perinuclear region. It is found in the cytoskeleton. The protein resides in the microtubule organizing center. The protein localises to the centrosome. Its subcellular location is the centriole. It localises to the spindle. It is found in the midbody. The protein resides in the chromosome. The protein localises to the perikaryon. Its subcellular location is the cell projection. It localises to the growth cone. It is found in the myelin membrane. The catalysed reaction is N(6)-acetyl-L-lysyl-[protein] + NAD(+) + H2O = 2''-O-acetyl-ADP-D-ribose + nicotinamide + L-lysyl-[protein]. It catalyses the reaction N(6)-tetradecanoyl-L-lysyl-[protein] + NAD(+) + H2O = 2''-O-tetradecanoyl-ADP-D-ribose + nicotinamide + L-lysyl-[protein]. It carries out the reaction N(6)-hexadecanoyl-L-lysyl-[protein] + NAD(+) + H2O = 2''-O-hexadecanoyl-ADP-D-ribose + nicotinamide + L-lysyl-[protein]. Inhibited by Sirtinol, A3 and M15 small molecules. Inhibited by nicotinamide. Inhibited by a macrocyclic peptide inhibitor S2iL5. Inhibited by EP300-induced acetylation. NAD-dependent protein deacetylase, which deacetylates internal lysines on histone and alpha-tubulin as well as many other proteins such as key transcription factors. Participates in the modulation of multiple and diverse biological processes such as cell cycle control, genomic integrity, microtubule dynamics, cell differentiation, metabolic networks, and autophagy. Plays a major role in the control of cell cycle progression and genomic stability. Functions in the antephase checkpoint preventing precocious mitotic entry in response to microtubule stress agents, and hence allowing proper inheritance of chromosomes. Positively regulates the anaphase promoting complex/cyclosome (APC/C) ubiquitin ligase complex activity by deacetylating CDC20 and FZR1, then allowing progression through mitosis. Associates both with chromatin at transcriptional start sites (TSSs) and enhancers of active genes. Plays a role in cell cycle and chromatin compaction through epigenetic modulation of the regulation of histone H4 'Lys-20' methylation (H4K20me1) during early mitosis. Specifically deacetylates histone H4 at 'Lys-16' (H4K16ac) between the G2/M transition and metaphase enabling H4K20me1 deposition by KMT5A leading to ulterior levels of H4K20me2 and H4K20me3 deposition throughout cell cycle, and mitotic S-phase progression. Deacetylates KMT5A modulating KMT5A chromatin localization during the mitotic stress response. Also deacetylates histone H3 at 'Lys-57' (H3K56ac) during the mitotic G2/M transition. Upon bacterium Listeria monocytogenes infection, deacetylates 'Lys-18' of histone H3 in a receptor tyrosine kinase MET- and PI3K/Akt-dependent manner, thereby inhibiting transcriptional activity and promoting late stages of listeria infection. During oocyte meiosis progression, may deacetylate histone H4 at 'Lys-16' (H4K16ac) and alpha-tubulin, regulating spindle assembly and chromosome alignment by influencing microtubule dynamics and kinetochore function. Deacetylates histone H4 at 'Lys-16' (H4K16ac) at the VEGFA promoter and thereby contributes to regulate expression of VEGFA, a key regulator of angiogenesis. Deacetylates alpha-tubulin at 'Lys-40' and hence controls neuronal motility, oligodendroglial cell arbor projection processes and proliferation of non-neuronal cells. Phosphorylation at Ser-368 by a G1/S-specific cyclin E-CDK2 complex inactivates SIRT2-mediated alpha-tubulin deacetylation, negatively regulating cell adhesion, cell migration and neurite outgrowth during neuronal differentiation. Deacetylates PARD3 and participates in the regulation of Schwann cell peripheral myelination formation during early postnatal development and during postinjury remyelination. Involved in several cellular metabolic pathways. Plays a role in the regulation of blood glucose homeostasis by deacetylating and stabilizing phosphoenolpyruvate carboxykinase PCK1 activity in response to low nutrient availability. Acts as a key regulator in the pentose phosphate pathway (PPP) by deacetylating and activating the glucose-6-phosphate G6PD enzyme, and therefore, stimulates the production of cytosolic NADPH to counteract oxidative damage. Maintains energy homeostasis in response to nutrient deprivation as well as energy expenditure by inhibiting adipogenesis and promoting lipolysis. Attenuates adipocyte differentiation by deacetylating and promoting FOXO1 interaction to PPARG and subsequent repression of PPARG-dependent transcriptional activity. Plays a role in the regulation of lysosome-mediated degradation of protein aggregates by autophagy in neuronal cells. Deacetylates FOXO1 in response to oxidative stress or serum deprivation, thereby negatively regulating FOXO1-mediated autophagy. Deacetylates a broad range of transcription factors and co-regulators regulating target gene expression. Deacetylates transcriptional factor FOXO3 stimulating the ubiquitin ligase SCF(SKP2)-mediated FOXO3 ubiquitination and degradation. Deacetylates HIF1A and therefore promotes HIF1A degradation and inhibition of HIF1A transcriptional activity in tumor cells in response to hypoxia. Deacetylates RELA in the cytoplasm inhibiting NF-kappaB-dependent transcription activation upon TNF-alpha stimulation. Inhibits transcriptional activation by deacetylating p53/TP53 and EP300. Also deacetylates EIF5A. Functions as a negative regulator on oxidative stress-tolerance in response to anoxia-reoxygenation conditions. Plays a role as tumor suppressor. In addition to protein deacetylase activity, also has activity toward long-chain fatty acyl groups and mediates protein-lysine demyristoylation and depalmitoylation of target proteins, such as ARF6 and KRAS, thereby regulating their association with membranes. Functionally, deacetylates EP300, alpha-tubulin and histone H3 and H4. In terms of biological role, lacks deacetylation activity, at least toward known SIRT2 targets. This chain is NAD-dependent protein deacetylase sirtuin-2 (SIRT2), found in Homo sapiens (Human).